Here is a 382-residue protein sequence, read N- to C-terminus: Chaperone protein DnaJ (382 aa).

A J domain is found at 5-70 (DFYEILGVPK…QKRAAYDQYG (66 aa)). The segment at 137 to 215 (GVTKEIRIPT…CHGHGRVEKT (79 aa)) adopts a CR-type zinc-finger fold. Residues cysteine 150, cysteine 153, cysteine 167, cysteine 170, cysteine 189, cysteine 192, cysteine 203, and cysteine 206 each contribute to the Zn(2+) site. CXXCXGXG motif repeat units follow at residues 150 to 157 (CDICHGSG), 167 to 174 (CPTCHGSG), 189 to 196 (CPHCHGRG), and 203 to 210 (CNKCHGHG).

This sequence belongs to the DnaJ family. As to quaternary structure, homodimer. It depends on Zn(2+) as a cofactor.

Its subcellular location is the cytoplasm. Its function is as follows. Participates actively in the response to hyperosmotic and heat shock by preventing the aggregation of stress-denatured proteins and by disaggregating proteins, also in an autonomous, DnaK-independent fashion. Unfolded proteins bind initially to DnaJ; upon interaction with the DnaJ-bound protein, DnaK hydrolyzes its bound ATP, resulting in the formation of a stable complex. GrpE releases ADP from DnaK; ATP binding to DnaK triggers the release of the substrate protein, thus completing the reaction cycle. Several rounds of ATP-dependent interactions between DnaJ, DnaK and GrpE are required for fully efficient folding. Also involved, together with DnaK and GrpE, in the DNA replication of plasmids through activation of initiation proteins. In Enterobacter sp. (strain 638), this protein is Chaperone protein DnaJ.